The sequence spans 1251 residues: ATP-dependent helicase/nuclease subunit A (1251 aa).

Residues 5 to 481 form the UvrD-like helicase ATP-binding domain; that stretch reads TKWTDEQWEA…IILSRNFRSR (477 aa). 26–33 serves as a coordination point for ATP; sequence AAAGAGKT. The 299-residue stretch at 526–824 folds into the UvrD-like helicase C-terminal domain; it reads TVGGEVEFHL…RIMSIHKSKG (299 aa). The disordered stretch occupies residues 544 to 565; it reads NFTFENEGEEGRQADEGEEDEE.

It belongs to the helicase family. AddA subfamily. In terms of assembly, heterodimer of AddA and AddB/RexB. Mg(2+) is required as a cofactor.

It catalyses the reaction Couples ATP hydrolysis with the unwinding of duplex DNA by translocating in the 3'-5' direction.. The enzyme catalyses ATP + H2O = ADP + phosphate + H(+). The heterodimer acts as both an ATP-dependent DNA helicase and an ATP-dependent, dual-direction single-stranded exonuclease. Recognizes the chi site generating a DNA molecule suitable for the initiation of homologous recombination. The AddA nuclease domain is required for chi fragment generation; this subunit has the helicase and 3' -&gt; 5' nuclease activities. This Acetivibrio thermocellus (strain ATCC 27405 / DSM 1237 / JCM 9322 / NBRC 103400 / NCIMB 10682 / NRRL B-4536 / VPI 7372) (Clostridium thermocellum) protein is ATP-dependent helicase/nuclease subunit A.